We begin with the raw amino-acid sequence, 314 residues long: Homeobox protein knotted-1-like 3 (314 aa).

Positions 218 to 238 constitute an ELK domain; that stretch reads ELKIELKQGFKSRIEDVREEI. Residues 239-302 constitute a DNA-binding region (homeobox; TALE-type); that stretch reads LRKRRAGKLP…NQRKRNWHNN (64 aa).

It belongs to the TALE/KNOX homeobox family. As to expression, isoform 1 is expressed in roots and flowers, and at lower levels in leaf blades and leaf sheaths. Isoform 2 is expressed in roots and flowers.

It localises to the nucleus. In Oryza sativa subsp. japonica (Rice), this protein is Homeobox protein knotted-1-like 3 (HOS66).